The sequence spans 354 residues: Endo-1,4-beta-xylanase 1 (354 aa).

In terms of domain architecture, GH10 spans 19–339 (SGLDAAMKAA…KPSYTSSLNT (321 aa)). Residue Asn117 is glycosylated (N-linked (GlcNAc...) asparagine). The active-site Proton donor is Glu147. Catalysis depends on Glu261, which acts as the Nucleophile. Cys289 and Cys295 are joined by a disulfide.

This sequence belongs to the glycosyl hydrolase 10 (cellulase F) family.

The protein resides in the secreted. It carries out the reaction Endohydrolysis of (1-&gt;4)-beta-D-xylosidic linkages in xylans.. It functions in the pathway glycan degradation; xylan degradation. In terms of biological role, endo-1,4-beta-xylanase involved in the hydrolysis of xylan, a major structural heterogeneous polysaccharide found in plant biomass representing the second most abundant polysaccharide in the biosphere, after cellulose. Plays an important role in causing fusarium head blight (FHB) on cereal crops. The protein is Endo-1,4-beta-xylanase 1 (XYL1) of Gibberella zeae (strain ATCC MYA-4620 / CBS 123657 / FGSC 9075 / NRRL 31084 / PH-1) (Wheat head blight fungus).